The primary structure comprises 102 residues: EPIDERMAL PATTERNING FACTOR-like protein 9 (102 aa).

The first 31 residues, 1–31 (MKHEMMNIKPRCITIFFLLFALLLGNYVVQA), serve as a signal peptide directing secretion. Disulfide bonds link Cys-65-Cys-98, Cys-70-Cys-77, and Cys-73-Cys-100.

It belongs to the plant cysteine rich small secretory peptide family. Epidermal patterning factor subfamily. Interacts with ERECTA and TMM. Expressed in immature organs, including leaves, stems and flower buds, but not in roots, shoot apical meristem and petals. Detected in the mesophyll tissues but not in the epidermal tissues where stomata develop.

It is found in the secreted. The protein localises to the extracellular space. Its subcellular location is the apoplast. Positively regulates stomatal density and patterning. Acts by competing with EPF2 (AC Q8LC53) for the same receptors, ERECTA (AC Q42371) and TMM (AC Q9SSD1). Not cleaved by the protease CRSP (AC Q9LNU1). This chain is EPIDERMAL PATTERNING FACTOR-like protein 9, found in Arabidopsis thaliana (Mouse-ear cress).